The sequence spans 172 residues: Small ribosomal subunit protein uS5 (172 aa).

One can recognise an S5 DRBM domain in the interval 17–80; that stretch reads LREKMISVNR…DEARRKMVKV (64 aa).

Belongs to the universal ribosomal protein uS5 family. In terms of assembly, part of the 30S ribosomal subunit. Contacts proteins S4 and S8.

In terms of biological role, with S4 and S12 plays an important role in translational accuracy. Located at the back of the 30S subunit body where it stabilizes the conformation of the head with respect to the body. This is Small ribosomal subunit protein uS5 from Cupriavidus taiwanensis (strain DSM 17343 / BCRC 17206 / CCUG 44338 / CIP 107171 / LMG 19424 / R1) (Ralstonia taiwanensis (strain LMG 19424)).